Consider the following 940-residue polypeptide: Isoleucine--tRNA ligase (940 aa).

A 'HIGH' region motif is present at residues 58–68 (PYANGSIHIGH). An L-isoleucyl-5'-AMP-binding site is contributed by E564. The 'KMSKS' region motif lies at 605–609 (KMSKS). K608 serves as a coordination point for ATP. Residues C903, C906, C923, and C926 each coordinate Zn(2+).

The protein belongs to the class-I aminoacyl-tRNA synthetase family. IleS type 1 subfamily. In terms of assembly, monomer. Zn(2+) is required as a cofactor.

Its subcellular location is the cytoplasm. The catalysed reaction is tRNA(Ile) + L-isoleucine + ATP = L-isoleucyl-tRNA(Ile) + AMP + diphosphate. In terms of biological role, catalyzes the attachment of isoleucine to tRNA(Ile). As IleRS can inadvertently accommodate and process structurally similar amino acids such as valine, to avoid such errors it has two additional distinct tRNA(Ile)-dependent editing activities. One activity is designated as 'pretransfer' editing and involves the hydrolysis of activated Val-AMP. The other activity is designated 'posttransfer' editing and involves deacylation of mischarged Val-tRNA(Ile). In Shewanella oneidensis (strain ATCC 700550 / JCM 31522 / CIP 106686 / LMG 19005 / NCIMB 14063 / MR-1), this protein is Isoleucine--tRNA ligase.